Consider the following 189-residue polypeptide: Peptide deformylase (189 aa).

2 residues coordinate Fe cation: cysteine 98 and histidine 140. The active site involves glutamate 141. Position 144 (histidine 144) interacts with Fe cation.

This sequence belongs to the polypeptide deformylase family. Requires Fe(2+) as cofactor.

The catalysed reaction is N-terminal N-formyl-L-methionyl-[peptide] + H2O = N-terminal L-methionyl-[peptide] + formate. Its function is as follows. Removes the formyl group from the N-terminal Met of newly synthesized proteins. Requires at least a dipeptide for an efficient rate of reaction. N-terminal L-methionine is a prerequisite for activity but the enzyme has broad specificity at other positions. This chain is Peptide deformylase, found in Porphyromonas gingivalis (strain ATCC 33277 / DSM 20709 / CIP 103683 / JCM 12257 / NCTC 11834 / 2561).